We begin with the raw amino-acid sequence, 55 residues long: Large ribosomal subunit protein bL33 (55 aa).

It belongs to the bacterial ribosomal protein bL33 family.

The sequence is that of Large ribosomal subunit protein bL33 from Allorhizobium ampelinum (strain ATCC BAA-846 / DSM 112012 / S4) (Agrobacterium vitis (strain S4)).